The sequence spans 308 residues: Ribonuclease Z (308 aa).

Positions 63, 65, 67, 68, 141, 212, and 270 each coordinate Zn(2+). The Proton acceptor role is filled by Asp67.

This sequence belongs to the RNase Z family. As to quaternary structure, homodimer. It depends on Zn(2+) as a cofactor.

It catalyses the reaction Endonucleolytic cleavage of RNA, removing extra 3' nucleotides from tRNA precursor, generating 3' termini of tRNAs. A 3'-hydroxy group is left at the tRNA terminus and a 5'-phosphoryl group is left at the trailer molecule.. Zinc phosphodiesterase, which displays some tRNA 3'-processing endonuclease activity. Probably involved in tRNA maturation, by removing a 3'-trailer from precursor tRNA. In Pediococcus pentosaceus (strain ATCC 25745 / CCUG 21536 / LMG 10740 / 183-1w), this protein is Ribonuclease Z.